We begin with the raw amino-acid sequence, 304 residues long: Nod factor export ATP-binding protein I (304 aa).

The ABC transporter domain maps to 6–236; that stretch reads IEFDKVKKSY…EIGCDVIEIF (231 aa). 38-45 is a binding site for ATP; that stretch reads GPNGAGKT.

This sequence belongs to the ABC transporter superfamily. Lipooligosaccharide exporter (TC 3.A.1.102) family. In terms of assembly, the complex is composed of two ATP-binding proteins (NodI) and two transmembrane proteins (NodJ).

The protein localises to the cell inner membrane. Functionally, part of the ABC transporter complex NodIJ involved in the export of the nodulation factors (Nod factors), the bacterial signal molecules that induce symbiosis and subsequent nodulation induction. Nod factors are LCO (lipo-chitin oligosaccharide), a modified beta-1,4-linked N-acetylglucosamine oligosaccharide. This subunit is responsible for energy coupling to the transport system. This chain is Nod factor export ATP-binding protein I, found in Paraburkholderia xenovorans (strain LB400).